A 393-amino-acid polypeptide reads, in one-letter code: S-adenosylmethionine synthase (393 aa).

H16 serves as a coordination point for ATP. Mg(2+) is bound at residue D18. E44 serves as a coordination point for K(+). 2 residues coordinate L-methionine: E57 and Q100. The interval 100 to 110 (QSNDIAQGVDH) is flexible loop. ATP contacts are provided by residues 167–169 (DAK), 238–239 (RF), D247, 253–254 (RK), A270, and K274. L-methionine is bound at residue D247. K278 is a binding site for L-methionine.

Belongs to the AdoMet synthase family. Homotetramer; dimer of dimers. Requires Mg(2+) as cofactor. K(+) is required as a cofactor.

Its subcellular location is the cytoplasm. It carries out the reaction L-methionine + ATP + H2O = S-adenosyl-L-methionine + phosphate + diphosphate. Its pathway is amino-acid biosynthesis; S-adenosyl-L-methionine biosynthesis; S-adenosyl-L-methionine from L-methionine: step 1/1. Catalyzes the formation of S-adenosylmethionine (AdoMet) from methionine and ATP. The overall synthetic reaction is composed of two sequential steps, AdoMet formation and the subsequent tripolyphosphate hydrolysis which occurs prior to release of AdoMet from the enzyme. This chain is S-adenosylmethionine synthase, found in Paracidovorax citrulli (strain AAC00-1) (Acidovorax citrulli).